The sequence spans 250 residues: Probable ABC transporter permease protein BAB2_1148 (250 aa).

Transmembrane regions (helical) follow at residues Leu-12–Val-32, Val-63–Trp-83, Trp-94–Leu-114, Ile-122–Ile-142, Val-172–Ala-192, and Leu-211–Phe-231. One can recognise an ABC transmembrane type-1 domain in the interval Ile-56–Leu-236.

Belongs to the binding-protein-dependent transport system permease family. As to quaternary structure, the complex is composed of two ATP-binding proteins (BAB2_1147), two transmembrane proteins (BAB2_1148) and a solute-binding protein (BAB2_1146).

It is found in the cell inner membrane. Its function is as follows. Probably part of an ABC transporter complex. Probably responsible for the translocation of the substrate across the membrane. This chain is Probable ABC transporter permease protein BAB2_1148, found in Brucella abortus (strain 2308).